Reading from the N-terminus, the 268-residue chain is Phosphatidylglycerol--prolipoprotein diacylglyceryl transferase (268 aa).

3 helical membrane passes run 16–36 (FITL…GIWL), 56–76 (IWLV…FNWG), and 92–112 (GIAI…FTYV). Arginine 136 contributes to the a 1,2-diacyl-sn-glycero-3-phospho-(1'-sn-glycerol) binding site. The next 3 helical transmembrane spans lie at 175–195 (PTFL…LWLF), 204–224 (GTLL…IEGL), and 236–256 (IAQV…FRLY).

Belongs to the Lgt family.

Its subcellular location is the cell inner membrane. The catalysed reaction is L-cysteinyl-[prolipoprotein] + a 1,2-diacyl-sn-glycero-3-phospho-(1'-sn-glycerol) = an S-1,2-diacyl-sn-glyceryl-L-cysteinyl-[prolipoprotein] + sn-glycerol 1-phosphate + H(+). It participates in protein modification; lipoprotein biosynthesis (diacylglyceryl transfer). Its function is as follows. Catalyzes the transfer of the diacylglyceryl group from phosphatidylglycerol to the sulfhydryl group of the N-terminal cysteine of a prolipoprotein, the first step in the formation of mature lipoproteins. The protein is Phosphatidylglycerol--prolipoprotein diacylglyceryl transferase of Thermosynechococcus vestitus (strain NIES-2133 / IAM M-273 / BP-1).